The following is an 878-amino-acid chain: Alanine--tRNA ligase (878 aa).

Positions 566, 570, 668, and 672 each coordinate Zn(2+).

Belongs to the class-II aminoacyl-tRNA synthetase family. Zn(2+) serves as cofactor.

Its subcellular location is the cytoplasm. It carries out the reaction tRNA(Ala) + L-alanine + ATP = L-alanyl-tRNA(Ala) + AMP + diphosphate. Catalyzes the attachment of alanine to tRNA(Ala) in a two-step reaction: alanine is first activated by ATP to form Ala-AMP and then transferred to the acceptor end of tRNA(Ala). Also edits incorrectly charged Ser-tRNA(Ala) and Gly-tRNA(Ala) via its editing domain. This chain is Alanine--tRNA ligase, found in Bacillus subtilis (strain 168).